The following is a 30-amino-acid chain: Cyclotide hyen-D (30 aa).

The segment at residues 1 to 30 (GFPCGESCVYIPCFTAAIGCSCKSKVCYKN) is a cross-link (cyclopeptide (Gly-Asn)). Disulfide bonds link C4-C20, C8-C22, and C13-C27.

Post-translationally, this is a cyclic peptide. As to expression, detected in stems (at protein level).

In terms of biological role, probably participates in a plant defense mechanism. Has strong cytotoxic activity against HUVEC cells (LC(50)= 0.58 uM) and various cancer cells including HeLa (LC(50)= 0.48 uM), MCF-7 and K562. Also displays some hemolytic activity. Binds to and induces leakage in phospholipd membranes, particularly ones containing 1-palmitoyl-2-oleophosphatidylethanolamine (POPE). In Pigea enneasperma (Spade flower), this protein is Cyclotide hyen-D.